The following is a 120-amino-acid chain: UPF0231 protein Spro_4007 (120 aa).

It belongs to the UPF0231 family.

The protein is UPF0231 protein Spro_4007 of Serratia proteamaculans (strain 568).